Consider the following 412-residue polypeptide: Multifunctional CCA protein (412 aa).

Gly8 and Arg11 together coordinate ATP. Residues Gly8 and Arg11 each coordinate CTP. Mg(2+) is bound by residues Asp21 and Asp23. The ATP site is built by Arg91, Arg137, and Arg140. The CTP site is built by Arg91, Arg137, and Arg140. The HD domain occupies 228-329; it reads TGIHTLMTLS…VKLFDSIDAW (102 aa).

Belongs to the tRNA nucleotidyltransferase/poly(A) polymerase family. Bacterial CCA-adding enzyme type 1 subfamily. In terms of assembly, monomer. Can also form homodimers and oligomers. It depends on Mg(2+) as a cofactor. Ni(2+) serves as cofactor.

The catalysed reaction is a tRNA precursor + 2 CTP + ATP = a tRNA with a 3' CCA end + 3 diphosphate. It catalyses the reaction a tRNA with a 3' CCA end + 2 CTP + ATP = a tRNA with a 3' CCACCA end + 3 diphosphate. Its function is as follows. Catalyzes the addition and repair of the essential 3'-terminal CCA sequence in tRNAs without using a nucleic acid template. Adds these three nucleotides in the order of C, C, and A to the tRNA nucleotide-73, using CTP and ATP as substrates and producing inorganic pyrophosphate. tRNA 3'-terminal CCA addition is required both for tRNA processing and repair. Also involved in tRNA surveillance by mediating tandem CCA addition to generate a CCACCA at the 3' terminus of unstable tRNAs. While stable tRNAs receive only 3'-terminal CCA, unstable tRNAs are marked with CCACCA and rapidly degraded. The protein is Multifunctional CCA protein of Escherichia coli O1:K1 / APEC.